Reading from the N-terminus, the 261-residue chain is Basic leucine zipper 19 (261 aa).

Disordered stretches follow at residues 1–22 and 74–100; these read MEDGELDFSNQEVFSSSEMGEL and ESDEKVSTDDTAESCGKKGEKRPLGNR. Over residues 8–18 the composition is skewed to polar residues; sequence FSNQEVFSSSE. A compositionally biased stretch (basic and acidic residues) spans 88–100; the sequence is CGKKGEKRPLGNR. A bZIP domain is found at 89 to 155; that stretch reads GKKGEKRPLG…SRLKCLLVDL (67 aa). Residues 90-113 form a basic motif region; sequence KKGEKRPLGNREAVRKYREKKKAK. Positions 117-131 are leucine-zipper; it reads LEDEVARLRAVNQQL. A compositionally biased stretch (low complexity) spans 237-248; it reads NGSFSNVNTSVS. The disordered stretch occupies residues 237 to 261; it reads NGSFSNVNTSVSNKRKGGHRASRAV. Residues 249–261 are compositionally biased toward basic residues; sequence NKRKGGHRASRAV.

It localises to the nucleus. Transcription factor involved in the response to zinc ion deficiency. Binds to the consensus sequence 5'-[AG]TGTCGACA[CT]-3' also called zinc deficiency response element (ZDRE). The ZDRE sequence is conserved in the plant kingdom and present in the promoters of genes that constitute the primary response to zinc deficiency, comprising additional ZIP metal transporter genes. Required for zinc accumulation in roots. Mediates the expression of the zinc transporters ZIP3, ZIP4, ZIP5 and ZIP9 during growth in zinc-deficient conditions. ZIP9 transporter is involved in zinc uptake in roots. This Arabidopsis thaliana (Mouse-ear cress) protein is Basic leucine zipper 19.